We begin with the raw amino-acid sequence, 172 residues long: 3-hydroxydecanoyl-[acyl-carrier-protein] dehydratase (172 aa).

Residue His71 is part of the active site.

The protein belongs to the thioester dehydratase family. FabA subfamily. In terms of assembly, homodimer.

The protein resides in the cytoplasm. It catalyses the reaction a (3R)-hydroxyacyl-[ACP] = a (2E)-enoyl-[ACP] + H2O. The catalysed reaction is (3R)-hydroxydecanoyl-[ACP] = (2E)-decenoyl-[ACP] + H2O. It carries out the reaction (2E)-decenoyl-[ACP] = (3Z)-decenoyl-[ACP]. The protein operates within lipid metabolism; fatty acid biosynthesis. In terms of biological role, necessary for the introduction of cis unsaturation into fatty acids. Catalyzes the dehydration of (3R)-3-hydroxydecanoyl-ACP to E-(2)-decenoyl-ACP and then its isomerization to Z-(3)-decenoyl-ACP. Can catalyze the dehydratase reaction for beta-hydroxyacyl-ACPs with saturated chain lengths up to 16:0, being most active on intermediate chain length. The protein is 3-hydroxydecanoyl-[acyl-carrier-protein] dehydratase of Salmonella choleraesuis (strain SC-B67).